Here is a 341-residue protein sequence, read N- to C-terminus: LIM and senescent cell antigen-like-containing domain protein 2 (341 aa).

LIM zinc-binding domains lie at Ala13–Pro74, Cys76–Lys133, Phe138–Ile195, Pro196–Asp255, and Val256–Glu315. Ser328 is modified (phosphoserine).

In terms of assembly, interacts with integrin-linked protein kinase 1 (ILK) via the first LIM domain, and in competition with LIMS1. Part of the heterotrimeric IPP complex composed of integrin-linked kinase (ILK), LIMS1 or LIMS2, and PARVA. Interacts with TGFB1I1. In terms of tissue distribution, detected in heart, lung, kidney, liver, urinary bladder, fat, skin, skeletal muscle, uterus, large intestine and testis.

It localises to the cell junction. The protein resides in the focal adhesion. Its subcellular location is the cell membrane. In terms of biological role, adapter protein in a cytoplasmic complex linking beta-integrins to the actin cytoskeleton, bridges the complex to cell surface receptor tyrosine kinases and growth factor receptors. The protein is LIM and senescent cell antigen-like-containing domain protein 2 (Lims2) of Mus musculus (Mouse).